The chain runs to 403 residues: uncharacterized protein (403 aa).

A Zn(2+)-binding site is contributed by histidine 81. Residue aspartate 83 is part of the active site. Aspartate 114 contacts Zn(2+). Glutamate 148 (proton acceptor) is an active-site residue. The Zn(2+) site is built by glutamate 149, glutamate 174, and histidine 374.

This sequence belongs to the peptidase M20A family. Zn(2+) serves as cofactor. It depends on Co(2+) as a cofactor.

This is an uncharacterized protein from Escherichia coli O157:H7.